Here is a 124-residue protein sequence, read N- to C-terminus: MDQDREQGSALDPRYDAAGLVTAVVTDHRSGEVLMLAHMNAEALAATLESGEATFFSRSRGRLWKKGESSGNVMRVVEARIDCDQDAIWLRCEPAGPACHTGERSCFYRRIDRDGPTLVRTIEV.

Mg(2+) is bound at residue aspartate 82. Cysteine 83 contributes to the Zn(2+) binding site. Mg(2+) contacts are provided by aspartate 84 and aspartate 86. Cysteine 99 and cysteine 106 together coordinate Zn(2+).

The protein belongs to the PRA-CH family. Homodimer. Mg(2+) is required as a cofactor. It depends on Zn(2+) as a cofactor.

It localises to the cytoplasm. It catalyses the reaction 1-(5-phospho-beta-D-ribosyl)-5'-AMP + H2O = 1-(5-phospho-beta-D-ribosyl)-5-[(5-phospho-beta-D-ribosylamino)methylideneamino]imidazole-4-carboxamide. It functions in the pathway amino-acid biosynthesis; L-histidine biosynthesis; L-histidine from 5-phospho-alpha-D-ribose 1-diphosphate: step 3/9. Its function is as follows. Catalyzes the hydrolysis of the adenine ring of phosphoribosyl-AMP. This chain is Phosphoribosyl-AMP cyclohydrolase, found in Rhizorhabdus wittichii (strain DSM 6014 / CCUG 31198 / JCM 15750 / NBRC 105917 / EY 4224 / RW1) (Sphingomonas wittichii).